The following is a 399-amino-acid chain: Subtilisin-like protease 4 (399 aa).

The N-terminal stretch at 1-19 is a signal peptide; the sequence is MVCLKTLSVFLAAFAAADA. Residues 20-118 constitute a propeptide that is removed on maturation; sequence RAVFKTQGHK…VEQDQVVRIS (99 aa). Positions 38 to 117 constitute an Inhibitor I9 domain; that stretch reads YIVVMKDGVS…YVEQDQVVRI (80 aa). Asn-102 is a glycosylation site (N-linked (GlcNAc...) asparagine). The 272-residue stretch at 128 to 399 folds into the Peptidase S8 domain; the sequence is SWGLGRVSHR…NRLLYNGSGQ (272 aa). Residues Asp-160 and His-191 each act as charge relay system in the active site. 2 N-linked (GlcNAc...) asparagine glycosylation sites follow: Asn-252 and Asn-308. Residue Ser-346 is the Charge relay system of the active site. The N-linked (GlcNAc...) asparagine glycan is linked to Asn-395.

The protein belongs to the peptidase S8 family.

Its subcellular location is the secreted. In terms of biological role, secreted subtilisin-like serine protease with keratinolytic activity that contributes to pathogenicity. The chain is Subtilisin-like protease 4 (SUB4) from Trichophyton tonsurans (Scalp ringworm fungus).